The sequence spans 2150 residues: Zinc finger protein sdc-3 (2150 aa).

Residues 443 to 987 (QEITSPMFAL…DQVENEEPER (545 aa)) are dosage compensation domain 1. Disordered regions lie at residues 874–894 (EKEW…EEED), 1261–1373 (GSVV…GPEV), 1411–1448 (FETS…GPIN), and 1491–1670 (EVLQ…SEKL). Residues 1267-1293 (TNQQEENVTSEGPTLQEGSSIPSSSHI) are compositionally biased toward polar residues. Residues 1321-1333 (KKSGKTTRGRPKK) are compositionally biased toward basic residues. Basic and acidic residues predominate over residues 1347-1357 (GQKEEAAHEPE). Residues 1504–1524 (SSKKRGRRRKKTPPHIAKARK) show a composition bias toward basic residues. A sex determination domain region spans residues 1508–1516 (RGRRRKKTP). The segment covering 1585 to 1598 (EDLHETERPGHVGE) has biased composition (basic and acidic residues). Over residues 1638–1648 (IQSQAGTNASP) the composition is skewed to polar residues. C2H2-type zinc fingers lie at residues 2078-2105 (HKCV…GKLH) and 2117-2141 (DDCQ…NHHH). Residues 2080 to 2105 (CVQCSIRNQSVYFSSYSLLELHGKLH) form a dosage compensation domain 2 region.

In terms of assembly, component of the SDC complex, which consists of sdc-1, sdc-2 and sdc-3. Within the complex, interacts with sdc-1 and sdc-2. Interacts with dpy-21. In terms of processing, sumoylated. Sumoylation is important for assembly of the dosage compensation complex and its robust binding to the X chromosome. In terms of tissue distribution, expressed in somatic and in germline tissues in hermaphrodites (XX). In males (XO), only present in embryos younger than the 100-cell stage (at protein level).

It is found in the chromosome. Its subcellular location is the nucleus. Component of the SDC complex that functions in sex determination and in X chromosome dosage compensation specifically in hermaphrodite (XX) animals. Plays a central role in the recruitment of the condensin I-like dosage compensation complex to the male sex-determining autosomal gene her-1, thereby contributing to its repression and initiating hermaphrodite sexual development. Involved in the recruitment and assembly of the dosage compensation complex and the dosage compensation protein dpy-21 onto the X chromosomes in hermaphrodites, which leads to a reduction of X-linked gene transcription and an equalization of X-linked gene expression between the sexes. This is Zinc finger protein sdc-3 (sdc-3) from Caenorhabditis elegans.